A 587-amino-acid chain; its full sequence is Leucine-rich repeat-containing protein 63 (587 aa).

7 LRR repeats span residues 251-274, 344-367, 368-390, 392-413, 414-436, 437-459, and 487-510; these read QSVI…IPPR, AFQL…ILCL, KNLQ…IQQL, FLRI…LFSL, SYLE…IQKL, RSLE…ILKL, and LTQI…IPVE.

This Homo sapiens (Human) protein is Leucine-rich repeat-containing protein 63 (LRRC63).